The primary structure comprises 421 residues: Stemmadenine O-acetyltransferase (421 aa).

The disordered stretch occupies residues 1–21 (MAPQMQILSEELIQPSSPTPQ). Catalysis depends on proton acceptor residues histidine 160 and aspartate 362.

The protein belongs to the plant acyltransferase family. In terms of assembly, monomer. Expressed in leaf epidermis.

It carries out the reaction 15alpha-stemmadenine + acetyl-CoA = O-acetyl-15alpha-stemmadenine + CoA. It participates in alkaloid biosynthesis. In terms of biological role, component of iboga and aspidosperma monoterpenoid indole alkaloids (MIAs, e.g. tabersonine and catharanthine) biosynthesis pathway from 19E-geissoschizine. Acetyltransferase that catalyzes the formation of O-acetylstemmadenine from stemmadenine. The protein is Stemmadenine O-acetyltransferase of Catharanthus roseus (Madagascar periwinkle).